The following is an 896-amino-acid chain: Alanine--tRNA ligase (896 aa).

Histidine 574, histidine 578, cysteine 677, and histidine 681 together coordinate Zn(2+).

The protein belongs to the class-II aminoacyl-tRNA synthetase family. The cofactor is Zn(2+).

The protein localises to the cytoplasm. It carries out the reaction tRNA(Ala) + L-alanine + ATP = L-alanyl-tRNA(Ala) + AMP + diphosphate. Functionally, catalyzes the attachment of alanine to tRNA(Ala) in a two-step reaction: alanine is first activated by ATP to form Ala-AMP and then transferred to the acceptor end of tRNA(Ala). Also edits incorrectly charged Ser-tRNA(Ala) and Gly-tRNA(Ala) via its editing domain. This Mycoplasma mycoides subsp. mycoides SC (strain CCUG 32753 / NCTC 10114 / PG1) protein is Alanine--tRNA ligase.